Consider the following 88-residue polypeptide: Small ribosomal subunit protein bS20 (88 aa).

The protein belongs to the bacterial ribosomal protein bS20 family.

Binds directly to 16S ribosomal RNA. The sequence is that of Small ribosomal subunit protein bS20 from Desulforamulus reducens (strain ATCC BAA-1160 / DSM 100696 / MI-1) (Desulfotomaculum reducens).